We begin with the raw amino-acid sequence, 319 residues long: Ribosomal RNA small subunit methyltransferase H (319 aa).

S-adenosyl-L-methionine contacts are provided by residues 52 to 54 (GGH), Asp70, Phe100, Asp126, and Gln133. Positions 289–319 (PKPLSPSELERQRNPRARSAKLRVAARSSQM) are disordered.

It belongs to the methyltransferase superfamily. RsmH family.

It is found in the cytoplasm. It carries out the reaction cytidine(1402) in 16S rRNA + S-adenosyl-L-methionine = N(4)-methylcytidine(1402) in 16S rRNA + S-adenosyl-L-homocysteine + H(+). In terms of biological role, specifically methylates the N4 position of cytidine in position 1402 (C1402) of 16S rRNA. In Synechococcus sp. (strain JA-2-3B'a(2-13)) (Cyanobacteria bacterium Yellowstone B-Prime), this protein is Ribosomal RNA small subunit methyltransferase H.